The following is a 371-amino-acid chain: MTFELLATDGKARRGRLTFPRGVVETPAFMPVGTYGTVKGMLPRDIEAIGAQIILGNTFHLWLRPGTEVIRRHGDLHDFMQWHGPILTDSGGFQVFSLGALRKIREEGVYFASPVDGAKVFMGPEESMRVQRDLGSDVVMIFDECTPYPADEEVARRSMELSLRWAGRSKIAHEGNPAALFGIVQGGMHEDLRLRSLDGLEEIGFDGLAIGGLSVGEPKEEMIRVLDFLPPRLPADKPRYLMGVGKPEDLVEGVRRGIDMFDCVMPTRNARNGHLFVDSGVLKIRNAVHRHDESPLDPACDCHTCKHFSRAYLHHLDKCGEMLGSMLNTIHNLRHYQRLMTGLREAIQQGKLAAFVDTFYARRGLPVPPLT.

The active-site Proton acceptor is the aspartate 89. Residues 89 to 93, aspartate 143, glutamine 185, and glycine 212 each bind substrate; that span reads DSGGF. The tract at residues 243 to 249 is RNA binding; the sequence is GVGKPED. Catalysis depends on aspartate 262, which acts as the Nucleophile. Positions 267 to 271 are RNA binding; important for wobble base 34 recognition; the sequence is TRNAR. Residues cysteine 300, cysteine 302, cysteine 305, and histidine 331 each contribute to the Zn(2+) site.

Belongs to the queuine tRNA-ribosyltransferase family. Homodimer. Within each dimer, one monomer is responsible for RNA recognition and catalysis, while the other monomer binds to the replacement base PreQ1. Requires Zn(2+) as cofactor.

It carries out the reaction 7-aminomethyl-7-carbaguanine + guanosine(34) in tRNA = 7-aminomethyl-7-carbaguanosine(34) in tRNA + guanine. It participates in tRNA modification; tRNA-queuosine biosynthesis. Functionally, catalyzes the base-exchange of a guanine (G) residue with the queuine precursor 7-aminomethyl-7-deazaguanine (PreQ1) at position 34 (anticodon wobble position) in tRNAs with GU(N) anticodons (tRNA-Asp, -Asn, -His and -Tyr). Catalysis occurs through a double-displacement mechanism. The nucleophile active site attacks the C1' of nucleotide 34 to detach the guanine base from the RNA, forming a covalent enzyme-RNA intermediate. The proton acceptor active site deprotonates the incoming PreQ1, allowing a nucleophilic attack on the C1' of the ribose to form the product. After dissociation, two additional enzymatic reactions on the tRNA convert PreQ1 to queuine (Q), resulting in the hypermodified nucleoside queuosine (7-(((4,5-cis-dihydroxy-2-cyclopenten-1-yl)amino)methyl)-7-deazaguanosine). This chain is Queuine tRNA-ribosyltransferase, found in Azotobacter vinelandii (strain DJ / ATCC BAA-1303).